The chain runs to 115 residues: NADH-ubiquinone oxidoreductase chain 3 (115 aa).

Helical transmembrane passes span 3–23 (LMLTLFTNATLASLLILIAFW), 55–75 (FFLVAITFLLFDLEIALLLPL), and 87–107 (VLFMALALITLLALSLAYEWI).

It belongs to the complex I subunit 3 family. In terms of assembly, core subunit of respiratory chain NADH dehydrogenase (Complex I) which is composed of 45 different subunits. Interacts with TMEM186. Interacts with TMEM242.

It is found in the mitochondrion inner membrane. It catalyses the reaction a ubiquinone + NADH + 5 H(+)(in) = a ubiquinol + NAD(+) + 4 H(+)(out). In terms of biological role, core subunit of the mitochondrial membrane respiratory chain NADH dehydrogenase (Complex I) which catalyzes electron transfer from NADH through the respiratory chain, using ubiquinone as an electron acceptor. Essential for the catalytic activity of complex I. This is NADH-ubiquinone oxidoreductase chain 3 from Dugong dugon (Dugong).